A 119-amino-acid polypeptide reads, in one-letter code: Beta-2-microglobulin (119 aa).

The first 20 residues, M1 to A20, serve as a signal peptide directing secretion. Residues P25–K114 enclose the Ig-like C1-type domain. A disulfide bridge connects residues C45 and C100.

The protein belongs to the beta-2-microglobulin family. In terms of assembly, heterodimer of an alpha chain and a beta chain. Beta-2-microglobulin is the beta-chain of major histocompatibility complex class I molecules.

The protein localises to the secreted. Component of the class I major histocompatibility complex (MHC). Involved in the presentation of peptide antigens to the immune system. The protein is Beta-2-microglobulin (B2M) of Leontopithecus chrysopygus (Golden-rumped lion tamarin).